A 591-amino-acid polypeptide reads, in one-letter code: Cytidine monophosphate-N-acetylneuraminic acid hydroxylase (591 aa).

The 99-residue stretch at 12-110 folds into the Rieske domain; the sequence is LEAEDVRNLK…AVLSETDGSL (99 aa). [2Fe-2S] cluster contacts are provided by cysteine 52, histidine 54, cysteine 73, and histidine 76.

It belongs to the CMP-Neu5Ac hydroxylase family. The cofactor is [2Fe-2S] cluster.

It is found in the cytoplasm. The enzyme catalyses CMP-N-acetyl-beta-neuraminate + 2 Fe(II)-[cytochrome b5] + O2 + 2 H(+) = CMP-N-glycoloyl-beta-neuraminate + 2 Fe(III)-[cytochrome b5] + H2O. It functions in the pathway amino-sugar metabolism; N-acetylneuraminate metabolism. Its function is as follows. Sialic acids are components of carbohydrate chains of glycoconjugates and are involved in cell-cell recognition and cell-pathogen interactions. Catalyzes the conversion of CMP-N-acetylneuraminic acid (CMP-Neu5Ac) into its hydroxylated derivative CMP-N-glycolylneuraminic acid (CMP-Neu5Gc), a sialic acid abundantly expressed at the surface of many cells. This Danio rerio (Zebrafish) protein is Cytidine monophosphate-N-acetylneuraminic acid hydroxylase (cmah).